Here is a 165-residue protein sequence, read N- to C-terminus: ER membrane protein complex subunit 5 (165 aa).

At 1–3 (MAP) the chain is on the cytoplasmic side. Residues 4–22 (SLWKGLVGIGLFALAHAAF) form a helical membrane-spanning segment. Residues 23–77 (SAAQHYFPSSGIKWKRKCEFLQSSSFQDKIFRSMYYVYDRSYMRLTEKEDESLPI) lie on the Lumenal side of the membrane. Residues 78 to 97 (DIVLQTLLAFAVTCYGIVHI) form a helical membrane-spanning segment. The Cytoplasmic segment spans residues 98-165 (AGEFKDMDAT…KLRKLESLRR (68 aa)). Phosphoserine is present on serine 154.

This sequence belongs to the membrane magnesium transporter (TC 1.A.67) family. Component of the ER membrane protein complex (EMC).

Its subcellular location is the endoplasmic reticulum membrane. It is found in the golgi apparatus membrane. The protein localises to the early endosome membrane. Functionally, part of the endoplasmic reticulum membrane protein complex (EMC) that enables the energy-independent insertion into endoplasmic reticulum membranes of newly synthesized membrane proteins. Preferentially accommodates proteins with transmembrane domains that are weakly hydrophobic or contain destabilizing features such as charged and aromatic residues. Involved in the cotranslational insertion of multi-pass membrane proteins in which stop-transfer membrane-anchor sequences become ER membrane spanning helices. It is also required for the post-translational insertion of tail-anchored/TA proteins in endoplasmic reticulum membranes. By mediating the proper cotranslational insertion of N-terminal transmembrane domains in an N-exo topology, with translocated N-terminus in the lumen of the ER, controls the topology of multi-pass membrane proteins like the G protein-coupled receptors. By regulating the insertion of various proteins in membranes, it is indirectly involved in many cellular processes. May be involved in Mg(2+) transport. This chain is ER membrane protein complex subunit 5, found in Bos taurus (Bovine).